The chain runs to 357 residues: Probable dual-specificity RNA methyltransferase RlmN (357 aa).

Catalysis depends on glutamate 95, which acts as the Proton acceptor. Residues 106–340 (NRDRHTVCVS…VSVREEKGTD (235 aa)) enclose the Radical SAM core domain. Cysteine 113 and cysteine 345 are oxidised to a cystine. Positions 120, 124, and 127 each coordinate [4Fe-4S] cluster. S-adenosyl-L-methionine is bound by residues 172-173 (GE), serine 204, 227-229 (SLH), and asparagine 302. Residue cysteine 345 is the S-methylcysteine intermediate of the active site.

It belongs to the radical SAM superfamily. RlmN family. The cofactor is [4Fe-4S] cluster.

Its subcellular location is the cytoplasm. The catalysed reaction is adenosine(2503) in 23S rRNA + 2 reduced [2Fe-2S]-[ferredoxin] + 2 S-adenosyl-L-methionine = 2-methyladenosine(2503) in 23S rRNA + 5'-deoxyadenosine + L-methionine + 2 oxidized [2Fe-2S]-[ferredoxin] + S-adenosyl-L-homocysteine. It carries out the reaction adenosine(37) in tRNA + 2 reduced [2Fe-2S]-[ferredoxin] + 2 S-adenosyl-L-methionine = 2-methyladenosine(37) in tRNA + 5'-deoxyadenosine + L-methionine + 2 oxidized [2Fe-2S]-[ferredoxin] + S-adenosyl-L-homocysteine. Specifically methylates position 2 of adenine 2503 in 23S rRNA and position 2 of adenine 37 in tRNAs. This Desulfitobacterium hafniense (strain DSM 10664 / DCB-2) protein is Probable dual-specificity RNA methyltransferase RlmN.